Consider the following 39-residue polypeptide: Photosystem II reaction center protein X (39 aa).

The chain crosses the membrane as a helical span at residues 11 to 31 (SLLWGAIVVVIPLSAALLFIS).

The protein belongs to the PsbX family. Type 1 subfamily. In terms of assembly, PSII is composed of 1 copy each of membrane proteins PsbA, PsbB, PsbC, PsbD, PsbE, PsbF, PsbH, PsbI, PsbJ, PsbK, PsbL, PsbM, PsbT, PsbX, PsbY, PsbZ, Psb30/Ycf12, at least 3 peripheral proteins of the oxygen-evolving complex and a large number of cofactors. It forms dimeric complexes.

The protein resides in the plastid. It localises to the cyanelle thylakoid membrane. In terms of biological role, involved in the binding and/or turnover of quinones at the Q(B) site of photosystem II (PSII). PSII is a light-driven water plastoquinone oxidoreductase, using light energy to abstract electrons from H(2)O, generating a proton gradient subsequently used for ATP formation. The polypeptide is Photosystem II reaction center protein X (Cyanophora paradoxa).